A 215-amino-acid polypeptide reads, in one-letter code: Ras-related protein SEC4 (215 aa).

GTP is bound at residue glycine 27 to serine 34. Positions phenylalanine 49 to phenylalanine 57 match the Effector region motif. Residues aspartate 75 to glutamine 79 and asparagine 133 to aspartate 136 each bind GTP. Residues serine 201 and serine 204 each carry the phosphoserine modification. Residues cysteine 214 and cysteine 215 are each lipidated (S-geranylgeranyl cysteine).

Belongs to the small GTPase superfamily. Rab family. As to quaternary structure, interacts with the guanyl-nucleotide exchange factor SEC2. Interacts with SRO7, YIF1, YIP3, YIP4 and YIP5.

It is found in the cytoplasmic vesicle. Its subcellular location is the secretory vesicle membrane. The protein localises to the cell membrane. The protein resides in the cytoplasm. Functionally, involved in exocytosis. Maybe by regulating the binding and fusion of secretory vesicles with the cell surface. The GTP-bound form of SEC4 may interact with an effector, thereby stimulating its activity and leading to exocytotic fusion. SEC4 may be an upstream activator of the 19.5S SEC8/SEC15 particle. SEC4 probably interacts directly with SEC8; it could serve as the attachment site for the SEC8/SEC15 particle. The chain is Ras-related protein SEC4 (SEC4) from Saccharomyces cerevisiae (strain ATCC 204508 / S288c) (Baker's yeast).